Here is a 399-residue protein sequence, read N- to C-terminus: Elongation factor Tu (399 aa).

The region spanning 10–204 is the tr-type G domain; sequence KPHVNIGTIG…AVDASIPEPE (195 aa). Residues 19 to 26 are G1; the sequence is GHVDHGKT. Position 19-26 (19-26) interacts with GTP; it reads GHVDHGKT. Thr26 lines the Mg(2+) pocket. Residues 60-64 form a G2 region; that stretch reads GITIN. A G3 region spans residues 81 to 84; it reads DCPG. GTP is bound by residues 81–85 and 136–139; these read DCPGH and NKCD. Residues 136–139 form a G4 region; sequence NKCD. The tract at residues 174 to 176 is G5; the sequence is SGL.

This sequence belongs to the TRAFAC class translation factor GTPase superfamily. Classic translation factor GTPase family. EF-Tu/EF-1A subfamily. In terms of assembly, monomer.

It is found in the cytoplasm. The enzyme catalyses GTP + H2O = GDP + phosphate + H(+). GTP hydrolase that promotes the GTP-dependent binding of aminoacyl-tRNA to the A-site of ribosomes during protein biosynthesis. The sequence is that of Elongation factor Tu from Prochlorococcus marinus (strain MIT 9215).